A 174-amino-acid polypeptide reads, in one-letter code: UPF0340 protein SH0921 (174 aa).

It belongs to the UPF0340 family.

The protein is UPF0340 protein SH0921 of Staphylococcus haemolyticus (strain JCSC1435).